The primary structure comprises 193 residues: Potassium-transporting ATPase KdpC subunit (193 aa).

The helical transmembrane segment at 7–27 (PLVVIFAVLTVVTGMAYPAVM) threads the bilayer.

This sequence belongs to the KdpC family. In terms of assembly, the system is composed of three essential subunits: KdpA, KdpB and KdpC.

It localises to the cell inner membrane. Its function is as follows. Part of the high-affinity ATP-driven potassium transport (or Kdp) system, which catalyzes the hydrolysis of ATP coupled with the electrogenic transport of potassium into the cytoplasm. This subunit acts as a catalytic chaperone that increases the ATP-binding affinity of the ATP-hydrolyzing subunit KdpB by the formation of a transient KdpB/KdpC/ATP ternary complex. This is Potassium-transporting ATPase KdpC subunit from Burkholderia vietnamiensis (strain G4 / LMG 22486) (Burkholderia cepacia (strain R1808)).